The chain runs to 145 residues: ATP synthase epsilon chain (145 aa).

It belongs to the ATPase epsilon chain family. As to quaternary structure, F-type ATPases have 2 components, CF(1) - the catalytic core - and CF(0) - the membrane proton channel. CF(1) has five subunits: alpha(3), beta(3), gamma(1), delta(1), epsilon(1). CF(0) has three main subunits: a, b and c.

The protein resides in the cell inner membrane. In terms of biological role, produces ATP from ADP in the presence of a proton gradient across the membrane. In Francisella tularensis subsp. tularensis (strain FSC 198), this protein is ATP synthase epsilon chain.